We begin with the raw amino-acid sequence, 200 residues long: Putative biotin transporter BioYB (200 aa).

Helical transmembrane passes span 13 to 33 (LIGM…VAPF), 36 to 56 (VAGI…LLLG), 61 to 81 (AIAM…FAQF), 90 to 110 (GKSG…GWFL), 121 to 141 (FLIA…TYMY), and 158 to 178 (WGFM…LSFI).

It belongs to the BioY family.

Its subcellular location is the cell membrane. Functionally, putative biotin transporter. The polypeptide is Putative biotin transporter BioYB (bioYB) (Bacillus subtilis (strain 168)).